Here is a 372-residue protein sequence, read N- to C-terminus: Ciliary neurotrophic factor receptor subunit alpha (372 aa).

The N-terminal stretch at 1 to 22 is a signal peptide; sequence MAAPVPWACCAVLAAAAAVVYA. An Ig-like C2-type domain is found at 27 to 104; that stretch reads PQEAPHVQYE…WHLRHQVLLH (78 aa). An intrachain disulfide couples C46 to C89. Residues N60, N70, N142, and N190 are each glycosylated (N-linked (GlcNAc...) asparagine). 2 Fibronectin type-III domains span residues 108–205 and 206–306; these read PPRE…VKPD and PPEN…TEEP. The short motif at 290 to 294 is the WSXWS motif element; that stretch reads WSDWS. The interval 301–340 is disordered; the sequence is PWTEEPRHLTTEAQAPETTTSTTSSLAPPPTTKICDPGEL. The span at 311–326 shows a compositional bias: low complexity; the sequence is TEAQAPETTTSTTSSL. The GPI-anchor amidated serine moiety is linked to residue S342. Residues 343–372 constitute a propeptide, removed in mature form; the sequence is GGGPSAPFLIHVPVTLALAAAAATANSLLI.

This sequence belongs to the type I cytokine receptor family. Type 3 subfamily. Forms a heterotrimer with LIFR and IL6ST. Interacts with heterodimeric neurotropic cytokine composed of CLCF1/CLC and CRLF1/CLF-1. Either alone or in complex with the heterodimer CLCF1-CRLF1 interacts with SORL1; this interaction may promote internalization and lysosomal degradation. Expressed in retina, brain, spleen, lung, liver and kidney. In the retina it is highly expressed by photoreceptors, but also found in the RPE, inner nuclear layer and ganglion cells.

The protein resides in the cell membrane. Its function is as follows. Binds to CNTF. The alpha subunit provides the receptor specificity. This Canis lupus familiaris (Dog) protein is Ciliary neurotrophic factor receptor subunit alpha (CNTFR).